A 120-amino-acid polypeptide reads, in one-letter code: Cu-Zn superoxide dismutase-like protein OPG175 (120 aa).

A disulfide bond links Cys-52 and Cys-102.

The protein belongs to the Cu-Zn superoxide dismutase family.

It is found in the virion. Its subcellular location is the host cytoplasm. Superoxide dismutase-like protein with no enzymatic activity. The sequence is that of Cu-Zn superoxide dismutase-like protein OPG175 (OPG175) from Vaccinia virus (strain Tashkent) (VACV).